A 192-amino-acid chain; its full sequence is Ion-translocating oxidoreductase complex subunit B (192 aa).

The segment at 1-26 is hydrophobic; sequence MNTIWIAVGALTLLGLVFGAILGYAS. The region spanning 32 to 91 is the 4Fe-4S domain; it reads EDDPVVEKIDAILPQSQCGQCGYPGCRPYAEAVGLQGEKINRCAPGGEAVMLKIAELLNV. The [4Fe-4S] cluster site is built by cysteine 49, cysteine 52, cysteine 57, cysteine 74, cysteine 117, cysteine 120, cysteine 123, cysteine 127, cysteine 147, cysteine 150, cysteine 153, and cysteine 157. 2 consecutive 4Fe-4S ferredoxin-type domains span residues 108–137 and 138–167; these read MLAV…GATR and AMHT…LRPV.

Belongs to the 4Fe4S bacterial-type ferredoxin family. RnfB subfamily. The complex is composed of six subunits: RsxA, RsxB, RsxC, RsxD, RsxE and RsxG. [4Fe-4S] cluster is required as a cofactor.

It is found in the cell inner membrane. Part of a membrane-bound complex that couples electron transfer with translocation of ions across the membrane. Required to maintain the reduced state of SoxR. This chain is Ion-translocating oxidoreductase complex subunit B, found in Salmonella dublin (strain CT_02021853).